We begin with the raw amino-acid sequence, 65 residues long: Large ribosomal subunit protein bL35 (65 aa).

Composition is skewed to basic residues over residues 1–15 (MPKM…KRFT) and 26–44 (QAFK…KRQL). The interval 1-65 (MPKMKTKKSA…KSVRAMMPYA (65 aa)) is disordered.

Belongs to the bacterial ribosomal protein bL35 family.

This chain is Large ribosomal subunit protein bL35, found in Cupriavidus metallidurans (strain ATCC 43123 / DSM 2839 / NBRC 102507 / CH34) (Ralstonia metallidurans).